A 79-amino-acid polypeptide reads, in one-letter code: MSAKKSPEEMKSIFQKYAAKEGDPNQLSKEELKLLIQSEFPSLLKASSTLDNLFKELDKNGDGEVSYEEFEVFFKKLSQ.

N-acetylserine is present on S2. 2 consecutive EF-hand domains span residues 13–48 and 45–79; these read IFQKYAAKEGDPNQLSKEELKLLIQSEFPSLLKASS and KASSTLDNLFKELDKNGDGEVSYEEFEVFFKKLSQ. Residues Q26 and E31 each coordinate Ca(2+). Phosphoserine occurs at positions 42 and 47. Ca(2+) is bound by residues D58, N60, D62, E64, and E69.

The protein belongs to the S-100 family.

This chain is Protein S100-G (S100g), found in Rattus norvegicus (Rat).